A 440-amino-acid polypeptide reads, in one-letter code: UDP-N-acetylglucosamine 1-carboxyvinyltransferase (440 aa).

22 to 23 (KN) lines the phosphoenolpyruvate pocket. UDP-N-acetyl-alpha-D-glucosamine is bound at residue arginine 102. Cysteine 126 (proton donor) is an active-site residue. Position 126 is a 2-(S-cysteinyl)pyruvic acid O-phosphothioketal (cysteine 126). UDP-N-acetyl-alpha-D-glucosamine is bound by residues 131-135 (RPVDQ), aspartate 320, and isoleucine 342.

It belongs to the EPSP synthase family. MurA subfamily.

It is found in the cytoplasm. The enzyme catalyses phosphoenolpyruvate + UDP-N-acetyl-alpha-D-glucosamine = UDP-N-acetyl-3-O-(1-carboxyvinyl)-alpha-D-glucosamine + phosphate. It functions in the pathway cell wall biogenesis; peptidoglycan biosynthesis. In terms of biological role, cell wall formation. Adds enolpyruvyl to UDP-N-acetylglucosamine. The protein is UDP-N-acetylglucosamine 1-carboxyvinyltransferase of Acidovorax ebreus (strain TPSY) (Diaphorobacter sp. (strain TPSY)).